A 118-amino-acid polypeptide reads, in one-letter code: MHEYSIVSALIEQCEQHAKANRANKITRVDIKLGVMSGVEPALLETAFETFKLDGICRDAELRMTLQPLVIACLDCHQESELTERSIVCPACHSYHTRVLDGEDMLLMQLEMEQEDEH.

H2 lines the Ni(2+) pocket. 4 residues coordinate Zn(2+): C73, C76, C89, and C92.

Belongs to the HypA/HybF family.

Involved in the maturation of [NiFe] hydrogenases. Required for nickel insertion into the metal center of the hydrogenase. This chain is Hydrogenase maturation factor HypA, found in Shewanella sp. (strain MR-7).